Reading from the N-terminus, the 255-residue chain is Triosephosphate isomerase (255 aa).

9–11 serves as a coordination point for substrate; that stretch reads NWK. The active-site Electrophile is H96. E168 acts as the Proton acceptor in catalysis. Substrate contacts are provided by G174 and S213.

The protein belongs to the triosephosphate isomerase family. As to quaternary structure, homodimer.

It localises to the cytoplasm. It carries out the reaction D-glyceraldehyde 3-phosphate = dihydroxyacetone phosphate. The protein operates within carbohydrate biosynthesis; gluconeogenesis. Its pathway is carbohydrate degradation; glycolysis; D-glyceraldehyde 3-phosphate from glycerone phosphate: step 1/1. In terms of biological role, involved in the gluconeogenesis. Catalyzes stereospecifically the conversion of dihydroxyacetone phosphate (DHAP) to D-glyceraldehyde-3-phosphate (G3P). This chain is Triosephosphate isomerase, found in Buchnera aphidicola subsp. Acyrthosiphon pisum (strain APS) (Acyrthosiphon pisum symbiotic bacterium).